We begin with the raw amino-acid sequence, 234 residues long: (5-formylfuran-3-yl)methyl phosphate synthase (234 aa).

The active-site Schiff-base intermediate with substrate is K27. Residue K85 is the Proton acceptor of the active site.

Belongs to the MfnB family.

The enzyme catalyses 2 D-glyceraldehyde 3-phosphate = 4-(hydroxymethyl)-2-furancarboxaldehyde phosphate + phosphate + 2 H2O. The protein operates within cofactor biosynthesis; methanofuran biosynthesis. Catalyzes the formation of 4-(hydroxymethyl)-2-furancarboxaldehyde phosphate (4-HFC-P) from two molecules of glyceraldehyde-3-P (GA-3-P). This is (5-formylfuran-3-yl)methyl phosphate synthase from Methanosarcina barkeri (strain Fusaro / DSM 804).